A 390-amino-acid chain; its full sequence is tRNA-specific 2-thiouridylase MnmA (390 aa).

ATP is bound by residues 36–43 (GMSGGVDS) and Met62. The tract at residues 122-124 (NPD) is interaction with target base in tRNA. Cys127 serves as the catalytic Nucleophile. Cys127 and Cys223 form a disulfide bridge. ATP is bound at residue Gly151. The segment at 173 to 175 (KDQ) is interaction with tRNA. Residue Cys223 is the Cysteine persulfide intermediate of the active site. An interaction with tRNA region spans residues 335 to 336 (RY).

Belongs to the MnmA/TRMU family.

The protein localises to the cytoplasm. The catalysed reaction is S-sulfanyl-L-cysteinyl-[protein] + uridine(34) in tRNA + AH2 + ATP = 2-thiouridine(34) in tRNA + L-cysteinyl-[protein] + A + AMP + diphosphate + H(+). Functionally, catalyzes the 2-thiolation of uridine at the wobble position (U34) of tRNA, leading to the formation of s(2)U34. This is tRNA-specific 2-thiouridylase MnmA from Marinomonas sp. (strain MWYL1).